Reading from the N-terminus, the 200-residue chain is Large ribosomal subunit protein uL18 (200 aa).

This sequence belongs to the universal ribosomal protein uL18 family. As to quaternary structure, part of the 50S ribosomal subunit. Contacts the 5S and 23S rRNAs.

Its function is as follows. This is one of the proteins that bind and probably mediate the attachment of the 5S RNA into the large ribosomal subunit, where it forms part of the central protuberance. This Thermococcus sibiricus (strain DSM 12597 / MM 739) protein is Large ribosomal subunit protein uL18.